The primary structure comprises 579 residues: Pre-mRNA-processing protein 45 (579 aa).

4 disordered regions span residues 1–64 (MTSV…GWRP), 218–254 (QQDP…LTAE), 343–414 (QKAR…TERR), and 521–579 (AAEA…VDDD). Positions 234-245 (RGPPSPPPPIMH) are enriched in pro residues. Basic and acidic residues predominate over residues 343-359 (QKAREERAASNRRDSRA). Low complexity predominate over residues 366-379 (ASRSPSAYSRSATP). Basic and acidic residues-rich tracts occupy residues 386-414 (ARER…TERR), 521-538 (AAEA…KDTT), and 563-579 (EVER…VDDD).

The protein belongs to the SNW family. In terms of assembly, associated with the spliceosome.

Its subcellular location is the nucleus. In terms of biological role, involved in pre-mRNA splicing. The protein is Pre-mRNA-processing protein 45 (prp45) of Aspergillus fumigatus (strain ATCC MYA-4609 / CBS 101355 / FGSC A1100 / Af293) (Neosartorya fumigata).